The chain runs to 489 residues: Trehalose-6-phosphate synthase (489 aa).

Residue Arg22 participates in D-glucose 6-phosphate binding. 42-43 (GG) contributes to the UDP-alpha-D-glucose binding site. D-glucose 6-phosphate is bound by residues Tyr94 and Asp148. UDP-alpha-D-glucose is bound by residues Arg290 and Lys295. D-glucose 6-phosphate is bound at residue Arg328. Residue 393–397 (LVAKE) coordinates UDP-alpha-D-glucose.

This sequence belongs to the glycosyltransferase 20 family. In terms of assembly, homotetramer.

It carries out the reaction ADP-alpha-D-glucose + D-glucose 6-phosphate = alpha,alpha-trehalose 6-phosphate + ADP + H(+). The enzyme catalyses CDP-alpha-D-glucose + D-glucose 6-phosphate = alpha,alpha-trehalose 6-phosphate + CDP + H(+). The catalysed reaction is GDP-alpha-D-glucose + D-glucose 6-phosphate = alpha,alpha-trehalose 6-phosphate + GDP + H(+). It catalyses the reaction TDP-alpha-D-glucose + D-glucose 6-phosphate = 5-methyl-UDP + alpha,alpha-trehalose 6-phosphate + H(+). It carries out the reaction D-glucose 6-phosphate + UDP-alpha-D-glucose = alpha,alpha-trehalose 6-phosphate + UDP + H(+). The protein operates within glycan biosynthesis; trehalose biosynthesis. Functionally, probably involved in the osmoprotection via the biosynthesis of trehalose and in the production of glycogen and alpha-glucan via the TreS-Pep2 branch involved in the biosynthesis of maltose-1-phosphate (M1P). Catalyzes the transfer of glucose from UDP-glucose (UDP-Glc) to D-glucose 6-phosphate (Glc-6-P) to form trehalose-6-phosphate. Probably also able to use ADP-Glc, CDP-Glc, GDP-Glc and TDP-Glc as glucosyl donors. The protein is Trehalose-6-phosphate synthase of Mycobacterium sp. (strain KMS).